The chain runs to 600 residues: Zinc metalloproteinase-disintegrin-like stejnihagin-A (600 aa).

Positions 1–20 (MIEVLLVTICLAVFPYQGSS) are cleaved as a signal peptide. Residues 21-191 (IILESGNVND…KASQLVVTAE (171 aa)) constitute a propeptide that is removed on maturation. Q192 is modified (pyrrolidone carboxylic acid). In terms of domain architecture, Peptidase M12B spans 198 to 389 (RYVKLAIVAD…YNPQCILNAP (192 aa)). Intrachain disulfides connect C306–C384, C346–C368, and C348–C351. A glycan (N-linked (GlcNAc...) asparagine) is linked at N317. A Zn(2+)-binding site is contributed by H331. Residue E332 is part of the active site. 2 residues coordinate Zn(2+): H335 and H341. N367 is a glycosylation site (N-linked (GlcNAc...) asparagine). The region spanning 397-483 (PPVCGNELLE…DCPTDDFHRN (87 aa)) is the Disintegrin domain. Ca(2+) contacts are provided by V399, N402, L404, E406, E409, and D412. 14 disulfides stabilise this stretch: C400–C429, C411–C424, C413–C419, C423–C446, C437–C443, C442–C468, C455–C475, C462–C494, C487–C499, C506–C556, C521–C565, C534–C544, C551–C587, and C581–C593. A D/ECD-tripeptide motif is present at residues 461 to 463 (ECD). An N-linked (GlcNAc...) asparagine glycan is attached at N568.

The protein belongs to the venom metalloproteinase (M12B) family. P-III subfamily. P-IIIa sub-subfamily. Monomer. Requires Zn(2+) as cofactor. Expressed by the venom gland.

It is found in the secreted. In terms of biological role, this metalloproteinase-disintegrin-like impairs hemostasis in the envenomed animal. The sequence is that of Zinc metalloproteinase-disintegrin-like stejnihagin-A from Trimeresurus stejnegeri (Chinese green tree viper).